The sequence spans 334 residues: Formamidase (334 aa).

The CN hydrolase domain occupies 14–260 (FLVAAIQFPV…WEIVTGEIYP (247 aa)). Residue E60 is the Proton acceptor of the active site. Catalysis depends on K133, which acts as the Proton donor. The active-site Nucleophile is the C166.

It belongs to the carbon-nitrogen hydrolase superfamily. Aliphatic amidase family.

It catalyses the reaction formamide + H2O = formate + NH4(+). Is an aliphatic amidase with a restricted substrate specificity, as it only hydrolyzes formamide. This is Formamidase from Helicobacter pylori (strain HPAG1).